The chain runs to 324 residues: NADH-cytochrome b5 reductase 2 (324 aa).

A helical membrane pass occupies residues 31-47 (IPLIGGITLAAGAGYYY). One can recognise an FAD-binding FR-type domain in the interval 70-178 (QGWIGLKLAH…KGPLPKYPWE (109 aa)). Position 181–216 (181–216 (KHDHICLIAGGTGITPMYQLVRKIFSNPEDKTKVTL)) interacts with FAD.

It belongs to the flavoprotein pyridine nucleotide cytochrome reductase family. Requires FAD as cofactor.

Its subcellular location is the mitochondrion outer membrane. The catalysed reaction is 2 Fe(III)-[cytochrome b5] + NADH = 2 Fe(II)-[cytochrome b5] + NAD(+) + H(+). Its function is as follows. May mediate the reduction of outer membrane cytochrome b5. The polypeptide is NADH-cytochrome b5 reductase 2 (MCR1) (Ajellomyces capsulatus (strain NAm1 / WU24) (Darling's disease fungus)).